Consider the following 646-residue polypeptide: Secretogranin-1 (646 aa).

The N-terminal stretch at 1–20 (MQPAALLGLLGATVVAAVSS) is a signal peptide. The cysteines at positions 36 and 57 are disulfide-linked. Over residues 67–90 (ELKNEEKSENENTRFEVRLLRDPA) the composition is skewed to basic and acidic residues. The interval 67–483 (ELKNEEKSEN…GKQYAPHHIT (417 aa)) is disordered. The residue at position 74 (Ser-74) is a Phosphoserine. Thr-79 and Thr-92 each carry phosphothreonine. 4 positions are modified to phosphoserine: Ser-93, Ser-99, Ser-100, and Ser-104. Residue Ser-93 is glycosylated (O-linked (Xyl...) (chondroitin sulfate) serine). O-linked (GalNAc...) threonine glycosylation is present at Thr-113. 2 stretches are compositionally biased toward basic and acidic residues: residues 119-128 (SGGHSRERAG) and 137-173 (KEAKTRYSKSEGQNREEEMVKYQKRERGEVGSEERLS). Ser-123, Ser-146, and Ser-168 each carry phosphoserine. Residues 182–191 (AFLNQRNQTP) are compositionally biased toward polar residues. Thr-190 carries an O-linked (GalNAc...) threonine glycan. Residue Ser-205 is modified to Phosphoserine. The segment covering 208 to 228 (GLEKSHSRERSSQESGEETKS) has biased composition (basic and acidic residues). O-linked (Xyl...) (chondroitin sulfate) serine glycosylation is present at Ser-222. The segment covering 260–270 (RHSRPRHHHGR) has biased composition (basic residues). Phosphoserine occurs at positions 276, 277, and 295. Tyr-315 is subject to Sulfotyrosine. Residues 340–361 (GRGEHQALRRPSEESLEQENKR) show a composition bias toward basic and acidic residues. Ser-351 and Ser-354 each carry phosphoserine. Tyr-374 bears the Phosphotyrosine mark. 2 positions are modified to phosphoserine: Ser-375 and Ser-378. Residues 406–425 (TDEKRFLGETHHRVQESQRD) show a composition bias toward basic and acidic residues. A Sulfotyrosine modification is found at Tyr-441. Basic and acidic residues-rich tracts occupy residues 442–451 (GEEKGEEAAR) and 459–472 (DPRDADENREEARL). Gln-476 is modified (pyrrolidone carboxylic acid; in secretogranin-1(476-566)). Phosphoserine occurs at positions 502, 503, and 514. The residue at position 535 (Tyr-535) is a Sulfotyrosine. Pyrrolidone carboxylic acid; in peptide BAM-1745 is present on Gln-567. Ser-584 bears the Phosphoserine mark. Residues 588-620 (PDFYDSEEQMSPQHTAENEEEKAGQGVLTEEEE) are disordered. At Tyr-591 the chain carries Sulfotyrosine. Phosphoserine occurs at positions 593 and 598. At Gln-634 the chain carries Pyrrolidone carboxylic acid; in Secretolytin; partial.

The protein belongs to the chromogranin/secretogranin protein family. In terms of assembly, interacts with ITPR1 in the secretory granules. O-glycosylated by the trisaccharide, GalNAc-Gal-NeuAc, on 2 sites in the N-terminal. May be glycated. Post-translationally, extensively phosphorylated. In terms of processing, differentially processed on numerous sites throughout the sequence depending on tissue type.

The protein resides in the cytoplasmic vesicle. The protein localises to the secretory vesicle membrane. It is found in the secreted. Its function is as follows. Secretogranin-1 is a neuroendocrine secretory granule protein, which may be the precursor for other biologically active peptides. The 16 pairs of basic AA distributed throughout its sequence may be used as proteolytic cleavage sites. Functionally, secretolytin has antibacterial activity. The polypeptide is Secretogranin-1 (CHGB) (Bos taurus (Bovine)).